The chain runs to 829 residues: Cation/H(+) antiporter 14 (829 aa).

The next 12 helical transmembrane spans lie at 48-68 (YAMP…RLLY), 77-97 (GMIS…FGQS), 117-137 (SNLG…ASII), 145-165 (ILIG…TVLF), 180-200 (ISTV…TVLA), 215-235 (NCSI…RMFL), 240-260 (LASV…FFVC), 281-301 (IPFF…EVLG), 329-349 (LEMF…GLQT), 361-383 (IIEA…ASAY), 392-412 (FSLA…CVMW), and 425-445 (LLII…VCLY). A Phosphoserine modification is found at Ser827.

Belongs to the monovalent cation:proton antiporter 2 (CPA2) transporter (TC 2.A.37) family. CHX (TC 2.A.37.4) subfamily. In terms of tissue distribution, preferentially expressed in pollen but also detected in vegetative tissues like leaf trichomes and root vascular tissues.

It is found in the membrane. In terms of biological role, may operate as a cation/H(+) antiporter. This chain is Cation/H(+) antiporter 14 (CHX14), found in Arabidopsis thaliana (Mouse-ear cress).